A 652-amino-acid chain; its full sequence is Acetyl-coenzyme A synthetase (652 aa).

CoA contacts are provided by residues arginine 191–arginine 194, threonine 311, and asparagine 335. ATP-binding positions include glycine 387 to proline 389, aspartate 411 to threonine 416, aspartate 500, and arginine 515. Serine 523 is a CoA binding site. Arginine 526 is a binding site for ATP. Mg(2+)-binding residues include valine 537, histidine 539, and isoleucine 542. Residue arginine 584 coordinates CoA. Lysine 609 is modified (N6-acetyllysine).

Belongs to the ATP-dependent AMP-binding enzyme family. It depends on Mg(2+) as a cofactor. Post-translationally, acetylated. Deacetylation by the SIR2-homolog deacetylase activates the enzyme.

The catalysed reaction is acetate + ATP + CoA = acetyl-CoA + AMP + diphosphate. In terms of biological role, catalyzes the conversion of acetate into acetyl-CoA (AcCoA), an essential intermediate at the junction of anabolic and catabolic pathways. Acs undergoes a two-step reaction. In the first half reaction, Acs combines acetate with ATP to form acetyl-adenylate (AcAMP) intermediate. In the second half reaction, it can then transfer the acetyl group from AcAMP to the sulfhydryl group of CoA, forming the product AcCoA. Its function is as follows. Enables the cell to use acetate during aerobic growth to generate energy via the TCA cycle, and biosynthetic compounds via the glyoxylate shunt. Acetylates CheY, the response regulator involved in flagellar movement and chemotaxis. This Citrobacter koseri (strain ATCC BAA-895 / CDC 4225-83 / SGSC4696) protein is Acetyl-coenzyme A synthetase.